An 865-amino-acid chain; its full sequence is Alanine--tRNA ligase (865 aa).

Positions 554, 558, 656, and 660 each coordinate Zn(2+).

It belongs to the class-II aminoacyl-tRNA synthetase family. Zn(2+) is required as a cofactor.

The protein resides in the cytoplasm. The enzyme catalyses tRNA(Ala) + L-alanine + ATP = L-alanyl-tRNA(Ala) + AMP + diphosphate. Functionally, catalyzes the attachment of alanine to tRNA(Ala) in a two-step reaction: alanine is first activated by ATP to form Ala-AMP and then transferred to the acceptor end of tRNA(Ala). Also edits incorrectly charged Ser-tRNA(Ala) and Gly-tRNA(Ala) via its editing domain. The protein is Alanine--tRNA ligase of Francisella tularensis subsp. tularensis (strain WY96-3418).